We begin with the raw amino-acid sequence, 151 residues long: Large ribosomal subunit protein uL15 (151 aa).

The interval 1–58 (MTSISLDSLKPNKGARKRKTRKGRGIAAGQGASCGFGMRGQKSRSGRPTRPGFEGGQM) is disordered. The span at 13–24 (KGARKRKTRKGR) shows a compositional bias: basic residues. Residues 26 to 38 (IAAGQGASCGFGM) show a composition bias toward gly residues.

Belongs to the universal ribosomal protein uL15 family. As to quaternary structure, part of the 50S ribosomal subunit.

In terms of biological role, binds to the 23S rRNA. The protein is Large ribosomal subunit protein uL15 of Prochlorococcus marinus (strain SARG / CCMP1375 / SS120).